The sequence spans 204 residues: MEAPAELLAALPALATALALLLAWLLVRRGAAASPEPARAPPEPAPPAEATGAPAPSRPCAPEPAASPAGPEEPGEPAGLGELGEPAGPGEPEGPGDPAAAPAEAEEQAVEARQEEEQDLDGEKGPSSEGPEEEDGEGFSFKYSPGKLRGNQYKKMMTKEELEEEQRVQKEQLAAIFKLMKDNKETFGEMSDGDVQEQLRLYDM.

The chain crosses the membrane as a helical span at residues 7–27 (LLAALPALATALALLLAWLLV). Positions 32–148 (AASPEPARAP…FSFKYSPGKL (117 aa)) are disordered. A compositionally biased stretch (pro residues) spans 38–47 (ARAPPEPAPP). A compositionally biased stretch (low complexity) spans 63–103 (EPAASPAGPEEPGEPAGLGELGEPAGPGEPEGPGDPAAAPA). A compositionally biased stretch (basic and acidic residues) spans 110-126 (VEARQEEEQDLDGEKGP). Ser191 bears the Phosphoserine mark.

The protein localises to the membrane. The sequence is that of Matrix-remodeling-associated protein 7 (MXRA7) from Homo sapiens (Human).